The chain runs to 1071 residues: DNA-directed RNA polymerase subunit beta (1071 aa).

It belongs to the RNA polymerase beta chain family. As to quaternary structure, in plastids the minimal PEP RNA polymerase catalytic core is composed of four subunits: alpha, beta, beta', and beta''. When a (nuclear-encoded) sigma factor is associated with the core the holoenzyme is formed, which can initiate transcription.

It is found in the plastid. It localises to the chloroplast. It carries out the reaction RNA(n) + a ribonucleoside 5'-triphosphate = RNA(n+1) + diphosphate. Functionally, DNA-dependent RNA polymerase catalyzes the transcription of DNA into RNA using the four ribonucleoside triphosphates as substrates. The protein is DNA-directed RNA polymerase subunit beta of Acorus gramineus (Dwarf sweet flag).